We begin with the raw amino-acid sequence, 1008 residues long: MSYDYHQNWGRDGGPRSSGGGYGGGPAGGHGGNRGSGGGGGGGGGGRGGRGRHPGHLKGREIGMWYAKKQGQKNKEAERQERAVVHMDERREEQIVQLLNSVQAKNDKESEAQISWFAPEDHGYGTEVSTKNTPCSENKLDIQEKKLINQEKKMFRIRNRSYIDRDSEYLLQENEPDGTLDQKLLEDLQKKKNDLRYIEMQHFREKLPSYGMQKELVNLIDNHQVTVISGETGCGKTTQVTQFILDNYIERGKGSACRIVCTQPRRISAISVAERVAAERAESCGSGNSTGYQIRLQSRLPRKQGSILYCTTGIILQWLQSDPYLSSVSHIVLDEIHERNLQSDVLMTVVKDLLNFRSDLKVILMSATLNAEKFSEYFGNCPMIHIPGFTFPVVEYLLEDVIEKIRYVPEQKEHRSQFKRGFMQGHVNRQEKEEKEAIYKERWPDYVRELRRRYSASTVDVIEMMEDDKVDLNLIVALIRYIVLEEEDGAILVFLPGWDNISTLHDLLMSQVMFKSDKFLIIPLHSLMPTVNQTQVFKRTPPGVRKIVIATNIAETSITIDDVVYVIDGGKIKETHFDTQNNISTMSAEWVSKANAKQRKGRAGRVQPGHCYHLYNGLRASLLDDYQLPEILRTPLEELCLQIKILRLGGIAYFLSRLMDPPSNEAVLLSIRHLMELNALDKQEELTPLGVHLARLPVEPHIGKMILFGALFCCLDPVLTIAASLSFKDPFVIPLGKEKIADARRKELAKDTRSDHLTVVNAFEGWEEARRRGFRYEKDYCWEYFLSSNTLQMLHNMKGQFAEHLLGAGFVSSRNPKDPESNINSDNEKIIKAVICAGLYPKVAKIRLNLGKKRKMVKVYTKTDGLVAVHPKSVNVEQTDFHYNWLIYHLKMRTSSIYLYDCTEVSPYCLLFFGGDISIQKDNDQETIAVDEWIVFQSPARIAHLVKELRKELDILLQEKIESPHPVDWNDTKSRDCAVLSAIIDLIKTQEKATPRNFPPRFQDGYYS.

Residues 1–51 (MSYDYHQNWGRDGGPRSSGGGYGGGPAGGHGGNRGSGGGGGGGGGGRGGRG) are required for recruitment to cytoplasmic stress granules. Positions 1-58 (MSYDYHQNWGRDGGPRSSGGGYGGGPAGGHGGNRGSGGGGGGGGGGRGGRGRHPGHLK) are disordered. A required for the pre-miR-134 transport region spans residues 1–104 (MSYDYHQNWG…IVQLLNSVQA (104 aa)). Residues 1–200 (MSYDYHQNWG…KKNDLRYIEM (200 aa)) form a necessary for nuclear and nucleolar caps localizations region. The span at 16-48 (RSSGGGYGGGPAGGHGGNRGSGGGGGGGGGGRG) shows a compositional bias: gly residues. A DSM (DHX36-specific motif) region spans residues 53–75 (HPGHLKGREIGMWYAKKQGQKNK). Residues 53 to 105 (HPGHLKGREIGMWYAKKQGQKNKEAERQERAVVHMDERREEQIVQLLNSVQAK) are required for G4-DNA- and G4-RNA-binding. The stretch at 72-157 (QKNKEAERQE…INQEKKMFRI (86 aa)) forms a coiled coil. RecA-like domain regions lie at residues 106–386 (NDKE…MIHI) and 387–628 (PGFT…DYQL). The residue at position 161 (Ser161) is a Phosphoserine. The Helicase ATP-binding domain occupies 217–387 (VNLIDNHQVT…FGNCPMIHIP (171 aa)). 233 to 238 (GCGKTT) serves as a coordination point for ATP. The necessary for interaction with single-stranded DNA at the 3'-end of the G4-DNA structure stretch occupies residues 265-317 (RRISAISVAERVAAERAESCGSGNSTGYQIRLQSRLPRKQGSILYCTTGIILQ). The short motif at 334 to 337 (DEIH) is the DEAH box element. 2 residues coordinate Mg(2+): Glu335 and His337. In terms of domain architecture, Helicase C-terminal spans 477–647 (ALIRYIVLEE…ELCLQIKILR (171 aa)). A necessary for interaction with single-stranded DNA at the 3'-end of the G4-DNA structure region spans residues 498 to 557 (WDNISTLHDLLMSQVMFKSDKFLIIPLHSLMPTVNQTQVFKRTPPGVRKIVIATNIAETS). The Nuclear localization signal signature appears at 517–528 (DKFLIIPLHSLM). ATP is bound by residues Ser557 and 602 to 605 (RAGR). The WH domain stretch occupies residues 629–698 (PEILRTPLEE…LGVHLARLPV (70 aa)). 3 necessary for interaction with single-stranded DNA at the 3'-end of the G4-DNA structure regions span residues 638 to 697 (ELCL…ARLP), 849 to 860 (NLGKKRKMVKVY), and 870 to 900 (HPKS…IYLY). Residues 841–905 (PKVAKIRLNL…SIYLYDCTEV (65 aa)) form an OB-fold-like subdomains region. Residue Lys947 is modified to N6-acetyllysine. Ser963 is modified (phosphoserine).

This sequence belongs to the DEAD box helicase family. DEAH subfamily. As to quaternary structure, found in a multi-helicase-TICAM1 complex at least composed of DHX36, DDX1, DDX21 and TICAM1; this complex exists in resting cells with or without dsRNA poly(I:C) ligand stimulation. Interacts (via C-terminus) with TICAM1 (via TIR domain). Interacts (via C-terminus) with DDX21; this interaction serves as bridges to TICAM1. Interacts with TERT; this interaction is dependent on the ability of DHX36 to bind to the G-quadruplex RNA (G4-RNA) structure present in the telomerase RNA template component (TERC). Interacts with DKC1; this interaction is dependent on the ability of DHX36 to bind to the G4-RNA structure present in TERC. Interacts with PARN; this interaction stimulates PARN to enhance uPA mRNA decay. Interacts with EXOSC3; this interaction occurs in a RNase-insensitive manner. Interacts with EXOSC10; this interaction occurs in a RNase-insensitive manner. Interacts with ILF3; this interaction occurs in a RNA-dependent manner. Interacts with ELAVL1; this interaction occurs in an RNA-dependent manner. Interacts with DDX5; this interaction occurs in a RNA-dependent manner. Interacts with DDX17; this interaction occurs in a RNA-dependent manner. Interacts with HDAC1; this interaction occurs in a RNA-dependent manner. Interacts with HDAC3; this interaction occurs in a RNA-dependent manner. Interacts with HDAC4. Interacts with AGO1. Interacts with AGO2. Interacts with ERCC6. Mg(2+) is required as a cofactor. As to expression, highly expressed in testis.

Its subcellular location is the nucleus. The protein resides in the cytoplasm. The protein localises to the cytosol. It is found in the stress granule. It localises to the nucleus speckle. Its subcellular location is the chromosome. The protein resides in the telomere. The protein localises to the mitochondrion. It is found in the perikaryon. It localises to the cell projection. Its subcellular location is the dendrite. The protein resides in the axon. The catalysed reaction is ATP + H2O = ADP + phosphate + H(+). ATPase activity is enhanced in the presence of homomeric poly(U) RNAs, but not by double-stranded DNA (dsDNA), double-stranded RNA (dsRNA) and tRNA. In terms of biological role, multifunctional ATP-dependent helicase that unwinds G-quadruplex (G4) structures. Plays a role in many biological processes such as genomic integrity, gene expression regulations and as a sensor to initiate antiviral responses. G4 structures correspond to helical structures containing guanine tetrads. Binds with high affinity to and unwinds G4 structures that are formed in nucleic acids (G4-DNA and G4-RNA). Plays a role in genomic integrity. Converts the G4-RNA structure present in telomerase RNA template component (TREC) into a double-stranded RNA to promote P1 helix formation that acts as a template boundary ensuring accurate reverse transcription. Plays a role in transcriptional regulation. Resolves G4-DNA structures in promoters of genes, such as YY1, KIT/c-kit and ALPL and positively regulates their expression. Plays a role in post-transcriptional regulation. Unwinds a G4-RNA structure located in the 3'-UTR polyadenylation site of the pre-mRNA TP53 and stimulates TP53 pre-mRNA 3'-end processing in response to ultraviolet (UV)-induced DNA damage. Binds to the precursor-microRNA-134 (pre-miR-134) terminal loop and regulates its transport into the synapto-dendritic compartment. Involved in the pre-miR-134-dependent inhibition of target gene expression and the control of dendritic spine size. Plays a role in the regulation of cytoplasmic mRNA translation and mRNA stability. Binds to both G4-RNA structures and alternative non-quadruplex-forming sequence within the 3'-UTR of the PITX1 mRNA regulating negatively PITX1 protein expression. Binds to both G4-RNA structure in the 5'-UTR and AU-rich elements (AREs) localized in the 3'-UTR of NKX2-5 mRNA to either stimulate protein translation or induce mRNA decay in an ELAVL1-dependent manner, respectively. Also binds to ARE sequences present in several mRNAs mediating exosome-mediated 3'-5' mRNA degradation. Involved in cytoplasmic urokinase-type plasminogen activator (uPA) mRNA decay. Component of a multi-helicase-TICAM1 complex that acts as a cytoplasmic sensor of viral double-stranded RNA (dsRNA) and plays a role in the activation of a cascade of antiviral responses including the induction of pro-inflammatory cytokines via the adapter molecule TICAM1. Required for early embryonic development and hematopoiesis. Involved in the regulation of cardioblast differentiation and proliferation during heart development. Involved in spermatogonia differentiation. May play a role in ossification. The sequence is that of ATP-dependent DNA/RNA helicase DHX36 from Homo sapiens (Human).